The primary structure comprises 378 residues: MLAPYACQPGESRGRQQPESMSTFRSPFQRDRDRIIHSSAFRRLKHKTQVFVEHEGDYYRTRLTHSIEVAQVARTISGVLGLNTDLAECIALAHDLGHTPFGHTGEDALAKLMEPYGGFDHNAQAMRIVTRLERHYAEFDGLNLTWESLEGIAKHNGPVEGPLPYALAEANAQWDLELHTYASAEAQVAAIADDVAYSHHDLHDGLRSGLFTEDDLMELPVTAPAFAEVDALYPGLEPMRRRHEALRRVFGRMVEDVIAVAQGRLEAAQPKSVEEIRQMGATVIRFSKPLYQELKVIRSFLFHRMYRAPSVMKERAKVTAVVNDLFPLFMRQPELLPQEWRRDVEAAEDETTLARIVADYVAGMTDRFALQEHARLCG.

The segment at 1–28 (MLAPYACQPGESRGRQQPESMSTFRSPF) is disordered. Residues 15–26 (RQQPESMSTFRS) show a composition bias toward polar residues. The region spanning 62–198 (RLTHSIEVAQ…AAIADDVAYS (137 aa)) is the HD domain.

This sequence belongs to the dGTPase family. Type 2 subfamily.

The protein is Deoxyguanosinetriphosphate triphosphohydrolase-like protein of Cereibacter sphaeroides (strain ATCC 17025 / ATH 2.4.3) (Rhodobacter sphaeroides).